A 359-amino-acid polypeptide reads, in one-letter code: DNA integrity scanning protein DisA (359 aa).

Positions Asp7–Ala145 constitute a DAC domain. Residues Gly74, Leu92, and Thr105–Thr109 each bind ATP.

The protein belongs to the DisA family. In terms of assembly, homooctamer. Mg(2+) is required as a cofactor.

It catalyses the reaction 2 ATP = 3',3'-c-di-AMP + 2 diphosphate. Participates in a DNA-damage check-point that is active prior to asymmetric division when DNA is damaged. DisA forms globular foci that rapidly scan along the chromosomes during sporulation, searching for lesions. When a lesion is present, DisA pauses at the lesion site. This triggers a cellular response that culminates in a temporary block in sporulation initiation. Functionally, also has diadenylate cyclase activity, catalyzing the condensation of 2 ATP molecules into cyclic di-AMP (c-di-AMP). c-di-AMP acts as a signaling molecule that couples DNA integrity with progression of sporulation. The rise in c-di-AMP level generated by DisA while scanning the chromosome, operates as a positive signal that advances sporulation; upon encountering a lesion, the DisA focus arrests at the damaged site and halts c-di-AMP synthesis. The polypeptide is DNA integrity scanning protein DisA (Parafrankia sp. (strain EAN1pec)).